The following is a 194-amino-acid chain: Anaphase-promoting complex subunit CDC26 (194 aa).

The tract at residues 47–194 (EPMDQSEPPR…PSSNTRSHRH (148 aa)) is disordered. 2 stretches are compositionally biased toward polar residues: residues 79–94 (GECT…TSAR) and 102–112 (LTLSTPVNPVS). Composition is skewed to low complexity over residues 154-166 (DESP…PESP) and 174-194 (TPGN…SHRH).

This sequence belongs to the CDC26 family. In terms of assembly, the APC/C complex is probably composed of at least 12 subunits: apc-2, apc-10, apc-11, cdc-26, emb-1, emb-27, emb-30, mat-1, mat-2, mat-3, such-1 and gfi-3.

The protein localises to the nucleus. The protein operates within protein modification; protein ubiquitination. Functionally, probable component of the anaphase promoting complex/cyclosome (APC/C), a cell cycle-regulated E3 ubiquitin ligase that controls progression through mitosis and the G1 phase of the cell cycle. The APC/C complex acts by mediating ubiquitination and subsequent degradation of target proteins. Developmental role in early embryogenesis and the metaphase to anaphase transition in meiosis and mitosis. Required for embryonic anterior-posterior axis formation. This is Anaphase-promoting complex subunit CDC26 from Caenorhabditis elegans.